The primary structure comprises 746 residues: NAD(P)H-quinone oxidoreductase subunit 5, chloroplastic (746 aa).

Transmembrane regions (helical) follow at residues 9-29 (WIIPFAPLPFTMSIGLGLLLV), 40-60 (WTFPSVSLLSIAMVFSVNLSI), 89-109 (IDPLTSIMSILITTVGIMVLI), 122-139 (LRFFAYMSFSNTSMLGLV), 147-167 (IYIFWELVGMCSYLLIGFWFT), 185-205 (GDFGLLLGILGFYWITGSFEF), 219-239 (NGVNSLFATLCAFLLFVGAVA), 258-278 (TPISALIHAATMVAAGIFLVA), 280-300 (LLPLFTVIPYIMNLISLIGVI), 327-347 (LGYIMLAPGIGSYRAALFHLI), 396-416 (TTFLLGTLSLCGIPPLACFWS), 425-445 (WLYSPIFAIIACSTAGLTAFY), 546-566 (LLPLLGLVLFTLFVGSVGIPF), 605-625 (IYSVSIACFGIFIASLFYGSI), and 722-742 (YLFVYLSYVSILLLIYYFYFF).

The protein belongs to the complex I subunit 5 family. NDH is composed of at least 16 different subunits, 5 of which are encoded in the nucleus.

It localises to the plastid. The protein resides in the chloroplast thylakoid membrane. It catalyses the reaction a plastoquinone + NADH + (n+1) H(+)(in) = a plastoquinol + NAD(+) + n H(+)(out). The catalysed reaction is a plastoquinone + NADPH + (n+1) H(+)(in) = a plastoquinol + NADP(+) + n H(+)(out). In terms of biological role, NDH shuttles electrons from NAD(P)H:plastoquinone, via FMN and iron-sulfur (Fe-S) centers, to quinones in the photosynthetic chain and possibly in a chloroplast respiratory chain. The immediate electron acceptor for the enzyme in this species is believed to be plastoquinone. Couples the redox reaction to proton translocation, and thus conserves the redox energy in a proton gradient. This is NAD(P)H-quinone oxidoreductase subunit 5, chloroplastic (ndhF) from Calycanthus floridus var. glaucus (Eastern sweetshrub).